The sequence spans 1067 residues: Protein bric-a-brac 2 (1067 aa).

Residues 30–121 (MAPPEEPKMV…PPRPLTSSEV (92 aa)) form a disordered region. Basic and acidic residues-rich tracts occupy residues 47–62 (HLEDQNRKYSPEREVE) and 86–98 (KSPEKDVETELVK). Tyr-55 is subject to Phosphotyrosine. 3 positions are modified to phosphoserine: Ser-56, Ser-87, and Ser-147. In terms of domain architecture, BTB spans 223 to 288 (VDVTLSCEGH…MYKGEINVCQ (66 aa)). 3 disordered regions span residues 312–412 (GRGE…QSQP), 444–505 (ANQR…AAQH), and 525–563 (GAAGAGGAGSGSGSGASAPTGGTGVAGSGAGAAVGSHHD). The span at 326 to 335 (FDDEDEEEEL) shows a compositional bias: acidic residues. At Ser-377 the chain carries Phosphoserine. Thr-384 carries the post-translational modification Phosphothreonine. Residues 391–412 (GGESEISERGSSGTPGQSQSQP) show a composition bias toward low complexity. Gly residues-rich tracts occupy residues 525 to 538 (GAAGAGGAGSGSGS) and 545 to 556 (GGTGVAGSGAGA). Positions 635–687 (FRERGPLKSWRPEAMAEAIFSVLKEGLSLSQAARKFDIPYPTFVLYANRVHNM) constitute an HTH psq-type domain. Residues 645-690 (RPEAMAEAIFSVLKEGLSLSQAARKFDIPYPTFVLYANRVHNMLGP) constitute a DNA-binding region (H-T-H motif). A DNA-binding region (a.T hook) is located at residues 697-708 (DPRPKARGRPQR). Disordered stretches follow at residues 796–829 (QILSQQQQHQQHHQQQAHHQQQPSHHQQQSPHAQ), 860–879 (AKHQQQQGERRGSENLPDLS), and 891–967 (VMPS…PYSA). A compositionally biased stretch (low complexity) spans 812 to 829 (AHHQQQPSHHQQQSPHAQ). A compositionally biased stretch (low complexity) spans 904–914 (AAPNSAASYAR). The segment covering 915–933 (ELSRERERDRERERERELS) has biased composition (basic and acidic residues). Over residues 934 to 949 (RQYGSQSRGSSSGSGS) the composition is skewed to low complexity.

In terms of tissue distribution, leg imaginal disk at the central region of the tarsus and in eye antenna disk at the basal cylinder.

The protein resides in the nucleus. Its function is as follows. Probably acts as a transcriptional regulator. Required for the specification of the tarsal segment. Also involved in antenna development. The protein is Protein bric-a-brac 2 (bab2) of Drosophila melanogaster (Fruit fly).